Here is a 368-residue protein sequence, read N- to C-terminus: tRNA-specific 2-thiouridylase MnmA (368 aa).

ATP is bound by residues 11 to 18 (GMSGGVDS) and Met37. The segment at 97–99 (NPD) is interaction with target base in tRNA. Cys102 (nucleophile) is an active-site residue. An intrachain disulfide couples Cys102 to Cys199. Gly127 provides a ligand contact to ATP. The interaction with tRNA stretch occupies residues 149–151 (KDQ). The active-site Cysteine persulfide intermediate is the Cys199. The tract at residues 311–312 (RY) is interaction with tRNA.

Belongs to the MnmA/TRMU family. In terms of assembly, interacts with TusE.

Its subcellular location is the cytoplasm. It catalyses the reaction S-sulfanyl-L-cysteinyl-[protein] + uridine(34) in tRNA + AH2 + ATP = 2-thiouridine(34) in tRNA + L-cysteinyl-[protein] + A + AMP + diphosphate + H(+). In terms of biological role, catalyzes the 2-thiolation of uridine at the wobble position (U34) of tRNA(Lys), tRNA(Glu) and tRNA(Gln), leading to the formation of s(2)U34, the first step of tRNA-mnm(5)s(2)U34 synthesis. Sulfur is provided by IscS, via a sulfur-relay system. Binds ATP and its substrate tRNAs. In Citrobacter koseri (strain ATCC BAA-895 / CDC 4225-83 / SGSC4696), this protein is tRNA-specific 2-thiouridylase MnmA.